The primary structure comprises 411 residues: 3-phosphoshikimate 1-carboxyvinyltransferase (411 aa).

3-phosphoshikimate is bound by residues Lys-20, Ser-21, and Arg-25. Lys-20 contributes to the phosphoenolpyruvate binding site. Gly-86 and Arg-114 together coordinate phosphoenolpyruvate. Residues Ser-156, Ser-157, Gln-158, Ser-181, Asp-295, and Lys-322 each coordinate 3-phosphoshikimate. Gln-158 contributes to the phosphoenolpyruvate binding site. Asp-295 serves as the catalytic Proton acceptor. The phosphoenolpyruvate site is built by Arg-326, Arg-367, and Lys-393.

It belongs to the EPSP synthase family. In terms of assembly, monomer.

It is found in the cytoplasm. The enzyme catalyses 3-phosphoshikimate + phosphoenolpyruvate = 5-O-(1-carboxyvinyl)-3-phosphoshikimate + phosphate. It participates in metabolic intermediate biosynthesis; chorismate biosynthesis. Catalyzes the transfer of the enolpyruvyl moiety of phosphoenolpyruvate (PEP) to the 5-hydroxyl of shikimate-3-phosphate (S3P) to produce enolpyruvyl shikimate-3-phosphate and inorganic phosphate. This chain is 3-phosphoshikimate 1-carboxyvinyltransferase, found in Picrophilus torridus (strain ATCC 700027 / DSM 9790 / JCM 10055 / NBRC 100828 / KAW 2/3).